The sequence spans 964 residues: Siderophore exporter MmpL5 (964 aa).

The next 12 membrane-spanning stretches (helical) occupy residues 31 to 51 (FAVPIILGWLVTIAVLNVTVP), 203 to 223 (SLQVIEAVTFTVIIVMLLLVY), 230 to 250 (AIMLTMVVLGLLATRGGVAFL), 255 to 275 (IIGLSTFATNLLVVLAIAAAT), 302 to 322 (MFGGTAHVVLGSGLTIAGATF), 340 to 360 (AIGMVIVVAAALTLGPAIIAV), 389 to 409 (WPGPILVGAVALALVGLLTLP), 773 to 793 (TYDLMIAGISALCLIFIIMLI), 803 to 823 (VIVGTVVLSLGASFGLSVLIW), 826 to 846 (ILGIELHWLVLAMAVIILLAV), 880 to 900 (VVTAAGLVFAFTMMSFAVSEL), and 923 to 943 (SFMTPSIAALLGKWFWWPQVV).

Belongs to the resistance-nodulation-cell division (RND) (TC 2.A.6) family. MmpL subfamily. In terms of assembly, interacts with MmpS5.

The protein localises to the cell inner membrane. Functionally, part of an export system, which is required for biosynthesis and secretion of siderophores. The polypeptide is Siderophore exporter MmpL5 (mmpL5) (Mycobacterium tuberculosis (strain CDC 1551 / Oshkosh)).